The chain runs to 885 residues: DNA mismatch repair protein MutS (885 aa).

626 to 633 (GPNMGGKS) is a binding site for ATP.

This sequence belongs to the DNA mismatch repair MutS family.

Its function is as follows. This protein is involved in the repair of mismatches in DNA. It is possible that it carries out the mismatch recognition step. This protein has a weak ATPase activity. In Burkholderia cenocepacia (strain HI2424), this protein is DNA mismatch repair protein MutS.